A 469-amino-acid chain; its full sequence is UDP-N-acetylmuramate--L-alanine ligase (469 aa).

114-120 (GTHGKTT) contacts ATP.

It belongs to the MurCDEF family.

Its subcellular location is the cytoplasm. It catalyses the reaction UDP-N-acetyl-alpha-D-muramate + L-alanine + ATP = UDP-N-acetyl-alpha-D-muramoyl-L-alanine + ADP + phosphate + H(+). It participates in cell wall biogenesis; peptidoglycan biosynthesis. In terms of biological role, cell wall formation. The polypeptide is UDP-N-acetylmuramate--L-alanine ligase (Chlorobium phaeovibrioides (strain DSM 265 / 1930) (Prosthecochloris vibrioformis (strain DSM 265))).